A 739-amino-acid polypeptide reads, in one-letter code: Phosphoribosylformylglycinamidine synthase subunit PurL (739 aa).

His-54 is an active-site residue. ATP is bound by residues Tyr-57 and Lys-96. Glu-98 contributes to the Mg(2+) binding site. Residues 99-102 (SHNH) and Arg-121 each bind substrate. The active-site Proton acceptor is His-100. Asp-122 is a binding site for Mg(2+). Residue Gln-245 participates in substrate binding. Asp-275 lines the Mg(2+) pocket. 319–321 (ESQ) is a binding site for substrate. ATP contacts are provided by Asp-504 and Gly-541. Asn-542 lines the Mg(2+) pocket. Ser-544 lines the substrate pocket.

The protein belongs to the FGAMS family. As to quaternary structure, monomer. Part of the FGAM synthase complex composed of 1 PurL, 1 PurQ and 2 PurS subunits.

It is found in the cytoplasm. It catalyses the reaction N(2)-formyl-N(1)-(5-phospho-beta-D-ribosyl)glycinamide + L-glutamine + ATP + H2O = 2-formamido-N(1)-(5-O-phospho-beta-D-ribosyl)acetamidine + L-glutamate + ADP + phosphate + H(+). The protein operates within purine metabolism; IMP biosynthesis via de novo pathway; 5-amino-1-(5-phospho-D-ribosyl)imidazole from N(2)-formyl-N(1)-(5-phospho-D-ribosyl)glycinamide: step 1/2. Its function is as follows. Part of the phosphoribosylformylglycinamidine synthase complex involved in the purines biosynthetic pathway. Catalyzes the ATP-dependent conversion of formylglycinamide ribonucleotide (FGAR) and glutamine to yield formylglycinamidine ribonucleotide (FGAM) and glutamate. The FGAM synthase complex is composed of three subunits. PurQ produces an ammonia molecule by converting glutamine to glutamate. PurL transfers the ammonia molecule to FGAR to form FGAM in an ATP-dependent manner. PurS interacts with PurQ and PurL and is thought to assist in the transfer of the ammonia molecule from PurQ to PurL. The polypeptide is Phosphoribosylformylglycinamidine synthase subunit PurL (Lactococcus lactis subsp. lactis (strain IL1403) (Streptococcus lactis)).